The following is a 304-amino-acid chain: UDP-3-O-acyl-N-acetylglucosamine deacetylase (304 aa).

Zn(2+) is bound by residues H78, H237, and D241. H264 acts as the Proton donor in catalysis.

The protein belongs to the LpxC family. The cofactor is Zn(2+).

It catalyses the reaction a UDP-3-O-[(3R)-3-hydroxyacyl]-N-acetyl-alpha-D-glucosamine + H2O = a UDP-3-O-[(3R)-3-hydroxyacyl]-alpha-D-glucosamine + acetate. It participates in glycolipid biosynthesis; lipid IV(A) biosynthesis; lipid IV(A) from (3R)-3-hydroxytetradecanoyl-[acyl-carrier-protein] and UDP-N-acetyl-alpha-D-glucosamine: step 2/6. Functionally, catalyzes the hydrolysis of UDP-3-O-myristoyl-N-acetylglucosamine to form UDP-3-O-myristoylglucosamine and acetate, the committed step in lipid A biosynthesis. This is UDP-3-O-acyl-N-acetylglucosamine deacetylase from Nitrosococcus oceani (strain ATCC 19707 / BCRC 17464 / JCM 30415 / NCIMB 11848 / C-107).